Consider the following 413-residue polypeptide: MLEKETINFEKTIIVGIVTQNQSEEKLKEYLDELEFLTFTAGGEVVKRFSQKMERPNPKTFLGTGKIEEINLYVLENGISTIVFDDELTPSQQKNISKIIDCKILDRTHLILDIFAQRAETSYARTQVELAQCIYLLPRLSGMWTHLERQKGGIGMRGPGETEIETDRRIVRDRIALLKEKIKIIDKQQATQRGNRGAMVRVALVGYTNVGKSTLMNAVGKSDVFVENKLFATLDTTVRKVVIKNLPFLLSDTVGFIRKLPTQLVDSFKSTLDEVREADLLLHVVDISHQDFEDHIDAVNKILLDIKSADKPTIMVFNKIDAYKHLTIDADDLMTERTSKHYTLQEWKNTWMNKVGEQNALFISATNKENFEEFRKKVYETVREIHITRFPYNKFLYPDYEDAIDKEEEQDQD.

Residues 200-386 (VRVALVGYTN…KVYETVREIH (187 aa)) enclose the Hflx-type G domain. Residues 206–213 (GYTNVGKS), 231–235 (FATLD), 252–255 (DTVG), 318–321 (NKID), and 364–366 (SAT) contribute to the GTP site. Residues serine 213 and threonine 233 each contribute to the Mg(2+) site.

This sequence belongs to the TRAFAC class OBG-HflX-like GTPase superfamily. HflX GTPase family. Monomer. Associates with the 50S ribosomal subunit. Mg(2+) serves as cofactor.

Its subcellular location is the cytoplasm. In terms of biological role, GTPase that associates with the 50S ribosomal subunit and may have a role during protein synthesis or ribosome biogenesis. This is GTPase HflX from Flavobacterium psychrophilum (strain ATCC 49511 / DSM 21280 / CIP 103535 / JIP02/86).